Here is a 278-residue protein sequence, read N- to C-terminus: uncharacterized protein (278 aa).

It localises to the cytoplasm. It is found in the nucleus. In terms of biological role, probable methyltransferase. This is an uncharacterized protein from Schizosaccharomyces pombe (strain 972 / ATCC 24843) (Fission yeast).